Reading from the N-terminus, the 90-residue chain is Small ribosomal subunit protein bS20 (90 aa).

Residues methionine 1–isoleucine 11 are compositionally biased toward basic and acidic residues. Disordered stretches follow at residues methionine 1 to arginine 29 and serine 69 to alanine 90.

This sequence belongs to the bacterial ribosomal protein bS20 family.

Binds directly to 16S ribosomal RNA. This Leptospira borgpetersenii serovar Hardjo-bovis (strain L550) protein is Small ribosomal subunit protein bS20.